Consider the following 156-residue polypeptide: Large ribosomal subunit protein uL22 (156 aa).

The protein belongs to the universal ribosomal protein uL22 family. Part of the 50S ribosomal subunit.

Functionally, this protein binds specifically to 23S rRNA. It makes multiple contacts with different domains of the 23S rRNA in the assembled 50S subunit and ribosome. In terms of biological role, the globular domain of the protein is located near the polypeptide exit tunnel on the outside of the subunit, while an extended beta-hairpin is found that lines the wall of the exit tunnel in the center of the 70S ribosome. The polypeptide is Large ribosomal subunit protein uL22 (Halobacterium salinarum (strain ATCC 700922 / JCM 11081 / NRC-1) (Halobacterium halobium)).